Here is a 232-residue protein sequence, read N- to C-terminus: Large ribosomal subunit protein uL1 (232 aa).

Belongs to the universal ribosomal protein uL1 family. As to quaternary structure, part of the 50S ribosomal subunit.

Binds directly to 23S rRNA. The L1 stalk is quite mobile in the ribosome, and is involved in E site tRNA release. Its function is as follows. Protein L1 is also a translational repressor protein, it controls the translation of the L11 operon by binding to its mRNA. The sequence is that of Large ribosomal subunit protein uL1 from Clostridium novyi (strain NT).